Here is a 940-residue protein sequence, read N- to C-terminus: Isoleucine--tRNA ligase (940 aa).

The 'HIGH' region signature appears at 58 to 68 (PYANGSIHIGH). An L-isoleucyl-5'-AMP-binding site is contributed by E564. Residues 605 to 609 (KMSKS) carry the 'KMSKS' region motif. K608 is a binding site for ATP. Zn(2+) is bound by residues C903, C906, C923, and C926.

The protein belongs to the class-I aminoacyl-tRNA synthetase family. IleS type 1 subfamily. As to quaternary structure, monomer. It depends on Zn(2+) as a cofactor.

It is found in the cytoplasm. The enzyme catalyses tRNA(Ile) + L-isoleucine + ATP = L-isoleucyl-tRNA(Ile) + AMP + diphosphate. Functionally, catalyzes the attachment of isoleucine to tRNA(Ile). As IleRS can inadvertently accommodate and process structurally similar amino acids such as valine, to avoid such errors it has two additional distinct tRNA(Ile)-dependent editing activities. One activity is designated as 'pretransfer' editing and involves the hydrolysis of activated Val-AMP. The other activity is designated 'posttransfer' editing and involves deacylation of mischarged Val-tRNA(Ile). In Shewanella sp. (strain ANA-3), this protein is Isoleucine--tRNA ligase.